A 66-amino-acid polypeptide reads, in one-letter code: Alpha-actitoxin-Ms11a-1 (66 aa).

An N-terminal signal peptide occupies residues 1–24 (MASKIFFVLAVFLVMSAVLPESFA). 3 cysteine pairs are disulfide-bonded: C26–C41, C33–C46, and C40–C61.

It localises to the secreted. Its subcellular location is the nematocyst. Alpha-toxins act on postsynaptic membranes, they bind to the nicotinic acetylcholine receptors (nAChR) and thus inhibit them. This toxin competes with alpha-bungarotoxin for binding to orthosteric sites on muscle-type T.carlifornicus (IC(50)=408 nM) and human alpha-7/CHRNA7 nAChRs (IC(50)=14.16 uM). The polypeptide is Alpha-actitoxin-Ms11a-1 (Metridium senile (Brown sea anemone)).